Reading from the N-terminus, the 500-residue chain is GTPase Der (500 aa).

EngA-type G domains are found at residues 3-166 (PVVA…MEEL) and 211-384 (IKLA…VSAT). GTP is bound by residues 9 to 16 (GRPNVGKS), 56 to 60 (DTGGI), 118 to 121 (NKID), 217 to 224 (GRPNVGKS), 264 to 268 (DTAGV), and 329 to 332 (NKWD). The KH-like domain occupies 385–469 (KRVGTSVLTR…PIRIQFQNSE (85 aa)). Residues 481–500 (LSQERQRKRLVGAVKNRNKK) form a disordered region. Over residues 486–500 (QRKRLVGAVKNRNKK) the composition is skewed to basic residues.

Belongs to the TRAFAC class TrmE-Era-EngA-EngB-Septin-like GTPase superfamily. EngA (Der) GTPase family. In terms of assembly, associates with the 50S ribosomal subunit.

Functionally, GTPase that plays an essential role in the late steps of ribosome biogenesis. In Aliivibrio salmonicida (strain LFI1238) (Vibrio salmonicida (strain LFI1238)), this protein is GTPase Der.